Consider the following 234-residue polypeptide: MLIVLSVGGSILAKNLDPKHFSAYASALKELARKHQIVVVTGGGVAARNYIDVARGVGANEVVCDFIGIDITRLNAQLLIAALGNTAHPEPPTTYKEAESALASGKIVVMGGVIPGQTTDAVAAILAEYLNADMMVIATSVDGVYSSDPREDPNAKKFDVMTAKELVGIVISTEMKAGSKSPVDPLASKIIERCNIDTIIMDGTDPQDVLEVVLQEAVKTDKVTGVRLGTRIIG.

An ATP-binding site is contributed by 9-10 (GS). UMP is bound at residue Gly43. ATP is bound by residues Gly44 and Arg48. UMP contacts are provided by residues Asp65 and 113-119 (VIPGQTT). ATP is bound by residues Thr139, Tyr145, and Asp148.

It belongs to the UMP kinase family. Homohexamer.

It localises to the cytoplasm. It catalyses the reaction UMP + ATP = UDP + ADP. It functions in the pathway pyrimidine metabolism; CTP biosynthesis via de novo pathway; UDP from UMP (UMPK route): step 1/1. Its activity is regulated as follows. Inhibited by UTP. In terms of biological role, catalyzes the reversible phosphorylation of UMP to UDP. This Methanococcoides burtonii (strain DSM 6242 / NBRC 107633 / OCM 468 / ACE-M) protein is Uridylate kinase.